The chain runs to 216 residues: Probable chemoreceptor glutamine deamidase CheD (216 aa).

The protein belongs to the CheD family.

The catalysed reaction is L-glutaminyl-[protein] + H2O = L-glutamyl-[protein] + NH4(+). In terms of biological role, probably deamidates glutamine residues to glutamate on methyl-accepting chemotaxis receptors (MCPs), playing an important role in chemotaxis. The protein is Probable chemoreceptor glutamine deamidase CheD of Halorhodospira halophila (strain DSM 244 / SL1) (Ectothiorhodospira halophila (strain DSM 244 / SL1)).